The sequence spans 872 residues: Sine oculis-binding protein homolog (872 aa).

Over residues 1–14 the composition is skewed to basic and acidic residues; it reads MAEMEKEGRPPENK. Residues 1-26 form a disordered region; that stretch reads MAEMEKEGRPPENKRSRKPAHPVKRE. 2 FCS-type zinc fingers span residues 142–180 and 216–256; these read DDVS…KCFA and FKNN…KCLN. 3 disordered regions span residues 308–354, 411–484, and 550–619; these read RRKA…KSMP, FIRG…PGAP, and KPPN…GRSE. Over residues 319-344 the composition is skewed to polar residues; sequence GQSQGPGPSASTTVSPSDTANCSVTK. Low complexity predominate over residues 417-433; it reads HHASNPNSPLSNPMLPG. Residues 460–484 are compositionally biased toward pro residues; it reads IHPPSTPTMPGNPPGLLPPPPPGAP. Positions 620 to 624 match the SUMO interaction motif 1 (SIM); mediates the binding to polysumoylated substrates motif; that stretch reads VVDLT. Phosphoserine is present on S629. The SUMO interaction motif 2 (SIM); mediates the binding to polysumoylated substrates signature appears at 651-655; that stretch reads VIDLT. K675 is covalently cross-linked (Glycyl lysine isopeptide (Lys-Gly) (interchain with G-Cter in SUMO2)). S697 is subject to Phosphoserine. Positions 728–770 are disordered; the sequence is AAEGAKGAEPPPEQPPPPPPPPPAPPKKLLSPEEPAVSELESV. The span at 736–753 shows a compositional bias: pro residues; sequence EPPPEQPPPPPPPPPAPP.

This sequence belongs to the SOBP family. In terms of assembly, interacts (via SIM domains) with SUMO1 and SUMO2.

Implicated in development of the cochlea. This Bos taurus (Bovine) protein is Sine oculis-binding protein homolog.